The sequence spans 476 residues: ATP synthase subunit beta (476 aa).

154–161 (GGAGVGKT) serves as a coordination point for ATP.

The protein belongs to the ATPase alpha/beta chains family. As to quaternary structure, F-type ATPases have 2 components, CF(1) - the catalytic core - and CF(0) - the membrane proton channel. CF(1) has five subunits: alpha(3), beta(3), gamma(1), delta(1), epsilon(1). CF(0) has three main subunits: a(1), b(2) and c(9-12). The alpha and beta chains form an alternating ring which encloses part of the gamma chain. CF(1) is attached to CF(0) by a central stalk formed by the gamma and epsilon chains, while a peripheral stalk is formed by the delta and b chains.

The protein resides in the cell inner membrane. It catalyses the reaction ATP + H2O + 4 H(+)(in) = ADP + phosphate + 5 H(+)(out). In terms of biological role, produces ATP from ADP in the presence of a proton gradient across the membrane. The catalytic sites are hosted primarily by the beta subunits. The chain is ATP synthase subunit beta from Nitrobacter winogradskyi (strain ATCC 25391 / DSM 10237 / CIP 104748 / NCIMB 11846 / Nb-255).